The sequence spans 562 residues: Ikaros family zinc finger protein (562 aa).

3 consecutive C2H2-type zinc fingers follow at residues Ile-45–His-67, Phe-73–His-95, and Phe-101–His-123. A C2H2-type 4; degenerate zinc finger spans residues Tyr-129–Pro-152. Disordered regions lie at residues Asn-178–Pro-210, Gln-293–Thr-342, Gln-361–Asp-404, and Asp-451–Asp-473. Over residues Pro-307–Ser-326 the composition is skewed to low complexity. Over residues Gly-327–Glu-336 the composition is skewed to polar residues. Residues Asp-369–Pro-383 show a composition bias toward basic and acidic residues. The span at Glu-456 to Thr-471 shows a compositional bias: polar residues. 2 consecutive C2H2-type zinc fingers follow at residues Trp-494 to His-516 and Leu-522 to His-546.

Belongs to the Ikaros C2H2-type zinc-finger protein family. Expression is strongest in the anterior Fol cells of the oikoplastic epithelium.

The protein localises to the nucleus. The sequence is that of Ikaros family zinc finger protein from Oikopleura dioica (Tunicate).